A 279-amino-acid chain; its full sequence is NADPH-dependent 7-cyano-7-deazaguanine reductase (279 aa).

A substrate-binding site is contributed by 86–88 (IES). An NADPH-binding site is contributed by 88–89 (SK). Catalysis depends on Cys-187, which acts as the Thioimide intermediate. Catalysis depends on Asp-194, which acts as the Proton donor. 226 to 227 (HE) serves as a coordination point for substrate. Residue 255-256 (RG) coordinates NADPH.

It belongs to the GTP cyclohydrolase I family. QueF type 2 subfamily. As to quaternary structure, homodimer.

Its subcellular location is the cytoplasm. It carries out the reaction 7-aminomethyl-7-carbaguanine + 2 NADP(+) = 7-cyano-7-deazaguanine + 2 NADPH + 3 H(+). Its pathway is tRNA modification; tRNA-queuosine biosynthesis. In terms of biological role, catalyzes the NADPH-dependent reduction of 7-cyano-7-deazaguanine (preQ0) to 7-aminomethyl-7-deazaguanine (preQ1). The polypeptide is NADPH-dependent 7-cyano-7-deazaguanine reductase (Haemophilus influenzae (strain ATCC 51907 / DSM 11121 / KW20 / Rd)).